A 161-amino-acid polypeptide reads, in one-letter code: Anaerobic nitrite reductase Glb1-2 (161 aa).

The Globin domain maps to 9–158 (AFTEEQEALV…LASAIIAEMK (150 aa)). Positions 42 to 46 (EIAPP) match the Homodimerization motif. Residues Ser-52, Lys-66, His-70, Lys-100, Thr-104, and His-105 each coordinate heme b. The Homodimerization signature appears at 112 to 124 (PEHFEVTKQALLD).

It belongs to the plant globin family. In terms of assembly, homodimer. Heme b serves as cofactor. As to expression, mainly expressed in root nodules and leaves, and, to a lower extent, in roots, stems, flowers and fruits. Accumulates in mature root nodules.

The catalysed reaction is Fe(III)-heme b-[protein] + nitric oxide + H2O = Fe(II)-heme b-[protein] + nitrite + 2 H(+). In terms of biological role, phytoglobin that reduces nitrite to nitric oxide (NO) under anoxic conditions (e.g. during flooding or in waterlogged soil) and upon root nodulation. Required for general plant development and during nodulation, especially for the onset of symbiosis. Monitors nitric oxide (NO) levels during early phase of the nitrogen-fixing symbiosis and buffers oxygen in functioning nodules. Necessary for the production of pods. May not function as an oxygen storage or transport protein. Has an unusually high affinity for O(2) through a hexacoordinate heme iron because of a very low dissociation constant. This is Anaerobic nitrite reductase Glb1-2 from Lotus japonicus (Lotus corniculatus var. japonicus).